Here is a 332-residue protein sequence, read N- to C-terminus: CAX-interacting protein 4 (332 aa).

The interval Gly-33–Tyr-59 is disordered. Residues Ser-41–Asp-54 show a composition bias toward basic and acidic residues. The CCHC-type zinc finger occupies Gly-81–Asn-98. The segment covering Ile-124 to Val-133 has biased composition (basic and acidic residues). A disordered region spans residues Ile-124–Glu-332. Acidic residues predominate over residues Glu-134–Ser-153. The segment covering Glu-154–Phe-163 has biased composition (basic and acidic residues). Composition is skewed to basic residues over residues Arg-198 to Arg-214 and Ser-227 to Arg-236. Acidic residues predominate over residues Asp-241–Asp-250. 2 stretches are compositionally biased toward basic residues: residues Val-254–Arg-269 and Ser-314–Glu-332.

In terms of assembly, interacts with CAX1. In terms of tissue distribution, expressed in leaves, stems and roots, and at lower levels in flowers.

It is found in the nucleus. In terms of biological role, may regulate CAX1 cation transporter. This Arabidopsis thaliana (Mouse-ear cress) protein is CAX-interacting protein 4 (CXIP4).